The chain runs to 265 residues: Indole-3-glycerol phosphate synthase (265 aa).

Belongs to the TrpC family.

It carries out the reaction 1-(2-carboxyphenylamino)-1-deoxy-D-ribulose 5-phosphate + H(+) = (1S,2R)-1-C-(indol-3-yl)glycerol 3-phosphate + CO2 + H2O. It functions in the pathway amino-acid biosynthesis; L-tryptophan biosynthesis; L-tryptophan from chorismate: step 4/5. The sequence is that of Indole-3-glycerol phosphate synthase from Chromobacterium violaceum (strain ATCC 12472 / DSM 30191 / JCM 1249 / CCUG 213 / NBRC 12614 / NCIMB 9131 / NCTC 9757 / MK).